A 729-amino-acid polypeptide reads, in one-letter code: Fatty acid oxidation complex subunit alpha (729 aa).

The interval 1-189 (MLYQSETLQL…KIGLVDAVVD (189 aa)) is enoyl-CoA hydratase/isomerase. D296 contacts substrate. Positions 311-729 (AAPKLAAVLG…LLDVSTNQPA (419 aa)) are 3-hydroxyacyl-CoA dehydrogenase. Residues M324, D343, 400 to 402 (VVE), K407, and S429 each bind NAD(+). The active-site For 3-hydroxyacyl-CoA dehydrogenase activity is H450. N453 contacts NAD(+). Substrate-binding residues include N500 and Y660.

This sequence in the N-terminal section; belongs to the enoyl-CoA hydratase/isomerase family. In the C-terminal section; belongs to the 3-hydroxyacyl-CoA dehydrogenase family. As to quaternary structure, heterotetramer of two alpha chains (FadB) and two beta chains (FadA).

The catalysed reaction is a (3S)-3-hydroxyacyl-CoA + NAD(+) = a 3-oxoacyl-CoA + NADH + H(+). The enzyme catalyses a (3S)-3-hydroxyacyl-CoA = a (2E)-enoyl-CoA + H2O. It catalyses the reaction a 4-saturated-(3S)-3-hydroxyacyl-CoA = a (3E)-enoyl-CoA + H2O. It carries out the reaction (3S)-3-hydroxybutanoyl-CoA = (3R)-3-hydroxybutanoyl-CoA. The catalysed reaction is a (3Z)-enoyl-CoA = a 4-saturated (2E)-enoyl-CoA. The enzyme catalyses a (3E)-enoyl-CoA = a 4-saturated (2E)-enoyl-CoA. It participates in lipid metabolism; fatty acid beta-oxidation. Functionally, involved in the aerobic and anaerobic degradation of long-chain fatty acids via beta-oxidation cycle. Catalyzes the formation of 3-oxoacyl-CoA from enoyl-CoA via L-3-hydroxyacyl-CoA. It can also use D-3-hydroxyacyl-CoA and cis-3-enoyl-CoA as substrate. This chain is Fatty acid oxidation complex subunit alpha, found in Yersinia pestis bv. Antiqua (strain Antiqua).